The primary structure comprises 342 residues: Anthranilate phosphoribosyltransferase (342 aa).

5-phospho-alpha-D-ribose 1-diphosphate is bound by residues G79, 82 to 83 (GD), T87, 89 to 92 (NIST), 107 to 115 (KHCNQRISS), and S119. Position 79 (G79) interacts with anthranilate. S91 contributes to the Mg(2+) binding site. Residue N110 participates in anthranilate binding. R165 contacts anthranilate. Positions 223 and 224 each coordinate Mg(2+).

Belongs to the anthranilate phosphoribosyltransferase family. As to quaternary structure, homodimer. It depends on Mg(2+) as a cofactor.

The catalysed reaction is N-(5-phospho-beta-D-ribosyl)anthranilate + diphosphate = 5-phospho-alpha-D-ribose 1-diphosphate + anthranilate. Its pathway is amino-acid biosynthesis; L-tryptophan biosynthesis; L-tryptophan from chorismate: step 2/5. In terms of biological role, catalyzes the transfer of the phosphoribosyl group of 5-phosphorylribose-1-pyrophosphate (PRPP) to anthranilate to yield N-(5'-phosphoribosyl)-anthranilate (PRA). The protein is Anthranilate phosphoribosyltransferase of Buchnera aphidicola subsp. Acyrthosiphon pisum (strain 5A).